Reading from the N-terminus, the 202-residue chain is Inner membrane-spanning protein YciB (202 aa).

The next 6 helical transmembrane spans lie at 3–23 (FFLD…AGAA), 46–66 (ILIA…IVWL), 74–94 (MLWV…VFHN), 100–120 (WKPT…ALLF), 145–165 (LAWI…AYGY), and 173–193 (FKLF…GFYL).

It belongs to the YciB family.

It localises to the cell inner membrane. Plays a role in cell envelope biogenesis, maintenance of cell envelope integrity and membrane homeostasis. The chain is Inner membrane-spanning protein YciB from Azoarcus sp. (strain BH72).